The primary structure comprises 570 residues: Sulfite reductase [NADPH] hemoprotein beta-component (570 aa).

Residues cysteine 434, cysteine 440, cysteine 479, and cysteine 483 each contribute to the [4Fe-4S] cluster site. Cysteine 483 contacts siroheme.

It belongs to the nitrite and sulfite reductase 4Fe-4S domain family. Alpha(8)-beta(8). The alpha component is a flavoprotein, the beta component is a hemoprotein. The cofactor is siroheme. [4Fe-4S] cluster is required as a cofactor.

The catalysed reaction is hydrogen sulfide + 3 NADP(+) + 3 H2O = sulfite + 3 NADPH + 4 H(+). It functions in the pathway sulfur metabolism; hydrogen sulfide biosynthesis; hydrogen sulfide from sulfite (NADPH route): step 1/1. Component of the sulfite reductase complex that catalyzes the 6-electron reduction of sulfite to sulfide. This is one of several activities required for the biosynthesis of L-cysteine from sulfate. The chain is Sulfite reductase [NADPH] hemoprotein beta-component from Salmonella enteritidis PT4 (strain P125109).